Here is a 419-residue protein sequence, read N- to C-terminus: UDP-N-acetylglucosamine 1-carboxyvinyltransferase (419 aa).

22 to 23 (KN) contacts phosphoenolpyruvate. Arg-93 contributes to the UDP-N-acetyl-alpha-D-glucosamine binding site. Cys-117 acts as the Proton donor in catalysis. Position 117 is a 2-(S-cysteinyl)pyruvic acid O-phosphothioketal (Cys-117). UDP-N-acetyl-alpha-D-glucosamine is bound by residues Asp-307 and Ile-329.

The protein belongs to the EPSP synthase family. MurA subfamily.

Its subcellular location is the cytoplasm. It carries out the reaction phosphoenolpyruvate + UDP-N-acetyl-alpha-D-glucosamine = UDP-N-acetyl-3-O-(1-carboxyvinyl)-alpha-D-glucosamine + phosphate. The protein operates within cell wall biogenesis; peptidoglycan biosynthesis. Its function is as follows. Cell wall formation. Adds enolpyruvyl to UDP-N-acetylglucosamine. This Shewanella woodyi (strain ATCC 51908 / MS32) protein is UDP-N-acetylglucosamine 1-carboxyvinyltransferase.